Reading from the N-terminus, the 319-residue chain is MFDDLSNYRPANPALWQGRKDTANQERFFQKITFIDNQNELMTKDKKTIFLGFASDAGIKRNLGRTGAKLGPDQIKTQLAKLPCHNNKHYVDLGNVICENDELELSQSQFAQIVHFCHENGHQICAFGGGHEIAWAHYQGLSSLYPKLGVINFDAHFDLRPYKKGELGNSGTPFSQIATYCEEKKMPFHYCCIGVQKFGNTPSLFEKAKKLNVSYLSAEDLYEQSQAWQIAFLDDFILNLDHIYLTICLDVLAECYAPGVSAPQALGLSPWQIMPLLKYLIQSGKVVSLDIAELSPPLDSELKTARLAALIIAELLDTN.

Mn(2+) contacts are provided by His-131, Asp-154, His-156, Asp-158, Cys-248, and Asp-250.

Belongs to the arginase family. The cofactor is Mn(2+).

The catalysed reaction is N-formimidoyl-L-glutamate + H2O = formamide + L-glutamate. It participates in amino-acid degradation; L-histidine degradation into L-glutamate; L-glutamate from N-formimidoyl-L-glutamate (hydrolase route): step 1/1. In terms of biological role, catalyzes the conversion of N-formimidoyl-L-glutamate to L-glutamate and formamide. The polypeptide is Formimidoylglutamase (Legionella pneumophila (strain Lens)).